Reading from the N-terminus, the 525-residue chain is Mitochondrial-processing peptidase subunit alpha (525 aa).

The transit peptide at 1–33 (MAAVVLAATRLLRGSGSWGCSRLRFGPPAYRRF) directs the protein to the mitochondrion. An N6-succinyllysine modification is found at K64. N6-acetyllysine is present on K299.

The protein belongs to the peptidase M16 family. Heterodimer of PMPCA (alpha) and PMPCB (beta) subunits, forming the mitochondrial processing protease (MPP) in which PMPCA is involved in substrate recognition and binding and PMPCB is the catalytic subunit. Ubiquitously expressed with highest expression in fetal tissues and adult brain, cerebellum and cerebellar vermis.

The protein resides in the mitochondrion matrix. Its subcellular location is the mitochondrion inner membrane. In terms of biological role, substrate recognition and binding subunit of the essential mitochondrial processing protease (MPP), which cleaves the mitochondrial sequence off newly imported precursors proteins. The chain is Mitochondrial-processing peptidase subunit alpha (PMPCA) from Homo sapiens (Human).